A 380-amino-acid chain; its full sequence is Probable protein phosphatase 2C 27 (380 aa).

The PPM-type phosphatase domain occupies 84 to 344 (RSGSCAEQGA…DNLTVIVVCF (261 aa)). D128, G129, D292, and D335 together coordinate Mn(2+).

The protein belongs to the PP2C family. The cofactor is Mg(2+). Requires Mn(2+) as cofactor. Expressed in roots, leaves, stems, flower, and trichomes.

It localises to the nucleus. Its subcellular location is the cytoplasm. It carries out the reaction O-phospho-L-seryl-[protein] + H2O = L-seryl-[protein] + phosphate. The catalysed reaction is O-phospho-L-threonyl-[protein] + H2O = L-threonyl-[protein] + phosphate. Functionally, confers salt tolerance by triggering the expression of stress-responsive genes. In Arabidopsis thaliana (Mouse-ear cress), this protein is Probable protein phosphatase 2C 27.